The chain runs to 170 residues: Adenine phosphoribosyltransferase (170 aa).

The protein belongs to the purine/pyrimidine phosphoribosyltransferase family. Homodimer.

It is found in the cytoplasm. It carries out the reaction AMP + diphosphate = 5-phospho-alpha-D-ribose 1-diphosphate + adenine. It participates in purine metabolism; AMP biosynthesis via salvage pathway; AMP from adenine: step 1/1. Its function is as follows. Catalyzes a salvage reaction resulting in the formation of AMP, that is energically less costly than de novo synthesis. The polypeptide is Adenine phosphoribosyltransferase (Mycoplasmopsis agalactiae (strain NCTC 10123 / CIP 59.7 / PG2) (Mycoplasma agalactiae)).